The following is a 177-amino-acid chain: Large ribosomal subunit protein uL6 (177 aa).

The protein belongs to the universal ribosomal protein uL6 family. As to quaternary structure, part of the 50S ribosomal subunit.

Its function is as follows. This protein binds to the 23S rRNA, and is important in its secondary structure. It is located near the subunit interface in the base of the L7/L12 stalk, and near the tRNA binding site of the peptidyltransferase center. The sequence is that of Large ribosomal subunit protein uL6 from Cronobacter sakazakii (strain ATCC BAA-894) (Enterobacter sakazakii).